The following is a 464-amino-acid chain: Alpha-1,6-mannosyl-glycoprotein 4-beta-N-acetylglucosaminyltransferase (464 aa).

Residues 1–10 (MRCSPKRSLT) lie on the Cytoplasmic side of the membrane. Residues 11 to 31 (AVIAASFLLLLLLLLLHRGSW) traverse the membrane as a helical; Signal-anchor for type II membrane protein segment. Residues 32–464 (QDPQEVQFRD…QSIGIWTAGT (433 aa)) are Lumenal-facing. N-linked (GlcNAc...) asparagine glycosylation is found at asparagine 70 and asparagine 201.

The protein belongs to the glycosyltransferase 54 family. The cofactor is a divalent metal cation. Highly expressed in oviduct, spleen, lung and colon.

It is found in the golgi apparatus membrane. It catalyses the reaction N(4)-{beta-D-GlcNAc-(1-&gt;2)-[beta-D-GlcNAc-(1-&gt;4)]-alpha-D-Man-(1-&gt;3)-[beta-D-GlcNAc-(1-&gt;2)-[beta-D-GlcNAc-(1-&gt;6)]-alpha-D-Man-(1-&gt;6)]-beta-D-Man-(1-&gt;4)-beta-D-GlcNAc-(1-&gt;4)-beta-D-GlcNAc}-L-asparaginyl-[protein] + UDP-N-acetyl-alpha-D-glucosamine = N(4)-{beta-D-GlcNAc-(1-&gt;2)-[beta-D-GlcNAc-(1-&gt;4)]-alpha-D-Man-(1-&gt;3)-[beta-D-GlcNAc-(1-&gt;2)-[beta-D-GlcNAc-(1-&gt;4)]-[beta-D-GlcNAc-(1-&gt;6)]-alpha-D-Man-(1-&gt;6)]-beta-D-Man-(1-&gt;4)-beta-D-GlcNAc-(1-&gt;4)-beta-D-GlcNAc}-L-asparaginyl-[protein] + UDP + H(+). The protein operates within protein modification; protein glycosylation. Its function is as follows. Glycosyltransferase that catalyzes the transfer of GlcNAc to the Manalpha1-6 arm to form GlcNAcBeta1-4Manalpha1-6 linkage (also named 'GnT-VI' activity). May also participate in the transfer of N-acetylglucosamine (GlcNAc) to the core mannose residues of N-linked glycans by catalyzing the formation of the GlcNAcbeta1-4 branch on the GlcNAcbeta1-2Manalpha1-3 arm of the core structure of N-linked glycans. The polypeptide is Alpha-1,6-mannosyl-glycoprotein 4-beta-N-acetylglucosaminyltransferase (MGAT4C) (Gallus gallus (Chicken)).